The primary structure comprises 276 residues: NH(3)-dependent NAD(+) synthetase (276 aa).

43–50 contributes to the ATP binding site; the sequence is GISGGVDS. Asp49 serves as a coordination point for Mg(2+). Arg146 serves as a coordination point for deamido-NAD(+). Residue Thr166 coordinates ATP. Glu171 lines the Mg(2+) pocket. 2 residues coordinate deamido-NAD(+): Lys179 and Asp186. 2 residues coordinate ATP: Lys195 and Thr217. 266 to 267 serves as a coordination point for deamido-NAD(+); that stretch reads HK.

This sequence belongs to the NAD synthetase family. As to quaternary structure, homodimer.

It carries out the reaction deamido-NAD(+) + NH4(+) + ATP = AMP + diphosphate + NAD(+) + H(+). It functions in the pathway cofactor biosynthesis; NAD(+) biosynthesis; NAD(+) from deamido-NAD(+) (ammonia route): step 1/1. Catalyzes the ATP-dependent amidation of deamido-NAD to form NAD. Uses ammonia as a nitrogen source. The sequence is that of NH(3)-dependent NAD(+) synthetase from Shewanella putrefaciens (strain CN-32 / ATCC BAA-453).